The following is a 91-amino-acid chain: UPF0250 protein NMA1380 (91 aa).

This sequence belongs to the UPF0250 family.

The sequence is that of UPF0250 protein NMA1380 from Neisseria meningitidis serogroup A / serotype 4A (strain DSM 15465 / Z2491).